Here is a 228-residue protein sequence, read N- to C-terminus: Probable septum site-determining protein MinC (228 aa).

Belongs to the MinC family. Interacts with MinD and FtsZ.

Its function is as follows. Cell division inhibitor that blocks the formation of polar Z ring septums. Rapidly oscillates between the poles of the cell to destabilize FtsZ filaments that have formed before they mature into polar Z rings. Prevents FtsZ polymerization. This chain is Probable septum site-determining protein MinC, found in Pectobacterium carotovorum subsp. carotovorum (strain PC1).